A 368-amino-acid polypeptide reads, in one-letter code: D-amino-acid oxidase (368 aa).

Residues alanine 11, serine 14, lysine 35, histidine 36, cysteine 46, serine 47, glycine 51, asparagine 53, and phenylalanine 174 each contribute to the FAD site. Cysteine 230 and cysteine 285 form a disulfide bridge. Tyrosine 244, tyrosine 260, and arginine 308 together coordinate (R)-lactate. Residues tyrosine 244, tyrosine 260, and arginine 308 each coordinate anthranilate. 5 residues coordinate FAD: arginine 308, glycine 334, glycine 337, tyrosine 338, and glutamine 339. The Microbody targeting signal motif lies at 366-368 (ARL).

This sequence belongs to the DAMOX/DASOX family. Homotetramer. It depends on FAD as a cofactor. Post-translationally, the disulfide bond might contribute to the high thermal stability of the protein.

Its subcellular location is the peroxisome matrix. The enzyme catalyses a D-alpha-amino acid + O2 + H2O = a 2-oxocarboxylate + H2O2 + NH4(+). The catalysed reaction is D-alanine + O2 + H2O = pyruvate + H2O2 + NH4(+). It catalyses the reaction D-glutamate + O2 + H2O = H2O2 + 2-oxoglutarate + NH4(+). It carries out the reaction D-serine + O2 + H2O = 3-hydroxypyruvate + H2O2 + NH4(+). The enzyme catalyses D-phenylalanine + O2 + H2O = 3-phenylpyruvate + H2O2 + NH4(+). The catalysed reaction is D-arginine + O2 + H2O = 5-guanidino-2-oxopentanoate + H2O2 + NH4(+). It catalyses the reaction D-methionine + O2 + H2O = 4-methylsulfanyl-2-oxobutanoate + H2O2 + NH4(+). It carries out the reaction D-leucine + O2 + H2O = 4-methyl-2-oxopentanoate + H2O2 + NH4(+). The enzyme catalyses D-lysine + O2 + H2O = 6-amino-2-oxohexanoate + H2O2 + NH4(+). The catalysed reaction is D-valine + O2 + H2O = 3-methyl-2-oxobutanoate + H2O2 + NH4(+). It catalyses the reaction D-histidine + O2 + H2O = 3-(imidazol-5-yl)pyruvate + H2O2 + NH4(+). It carries out the reaction D-glutamine + O2 + H2O = 2-oxoglutaramate + H2O2 + NH4(+). The enzyme catalyses D-isoleucine + O2 + H2O = (R)-3-methyl-2-oxopentanoate + H2O2 + NH4(+). The catalysed reaction is D-allo-isoleucine + O2 + H2O = (S)-3-methyl-2-oxopentanoate + H2O2 + NH4(+). It catalyses the reaction D-threonine + O2 + H2O = (S)-3-hydroxy-2-oxobutanoate + H2O2 + NH4(+). It carries out the reaction D-asparagine + O2 + H2O = 2-oxosuccinamate + H2O2 + NH4(+). The enzyme catalyses D-tryptophan + O2 + H2O = indole-3-pyruvate + H2O2 + NH4(+). The catalysed reaction is D-tyrosine + O2 + H2O = 3-(4-hydroxyphenyl)pyruvate + H2O2 + NH4(+). Partially inhibited by benzoate, crotonate, and D-malate. Functionally, catalyzes the oxidative deamination of D-amino acids with broad substrate specificity. Enables the organism to utilize D-amino acids as a source of nutrients. Unusually, has high activity on D-glutamate. This is D-amino-acid oxidase from Talaromyces emersonii (Thermophilic fungus).